Reading from the N-terminus, the 350-residue chain is Galactokinase (350 aa).

15–18 (EHTD) lines the substrate pocket. Residues Ser47 and 99–105 (GAGLSSS) contribute to the ATP site. Positions 105 and 137 each coordinate Mg(2+). Catalysis depends on Asp149, which acts as the Proton acceptor. Residue Tyr198 coordinates substrate.

Belongs to the GHMP kinase family. GalK subfamily.

The protein resides in the cytoplasm. The enzyme catalyses alpha-D-galactose + ATP = alpha-D-galactose 1-phosphate + ADP + H(+). Its pathway is carbohydrate metabolism; galactose metabolism. Its function is as follows. Catalyzes the transfer of the gamma-phosphate of ATP to D-galactose to form alpha-D-galactose-1-phosphate (Gal-1-P). This Pyrococcus horikoshii (strain ATCC 700860 / DSM 12428 / JCM 9974 / NBRC 100139 / OT-3) protein is Galactokinase.